A 65-amino-acid polypeptide reads, in one-letter code: uncharacterized protein (65 aa).

The tract at residues 1 to 30 (MPAASLESLLPPPPGKLPSPPLRPHGKFQR) is disordered. Residues 10–23 (LPPPPGKLPSPPLR) are compositionally biased toward pro residues.

This is an uncharacterized protein from Homo sapiens (Human).